The chain runs to 234 residues: Cyclo(L-leucyl-L-leucyl) synthase (234 aa).

Residue serine 28 is the Nucleophile of the active site. Substrate is bound by residues 171-175, tyrosine 195, and 200-201; these read YVLAE and EL.

Belongs to the CDPS family.

The enzyme catalyses 2 L-leucyl-tRNA(Leu) = cyclo(L-leucyl-L-leucyl) + 2 tRNA(Leu) + 2 H(+). Functionally, it uses activated amino acids in the form of aminoacyl-tRNAs (aa-tRNAs) as substrates to catalyze the ATP-independent formation of cyclodipeptides which are intermediates in diketopiperazine (DKP) biosynthetic pathways. Catalyzes the formation of cyclo(L-Leu-L-Leu) (cLL) from L-leucyl-tRNA(Leu). Can incorporate various nonpolar residues, such as L-phenylalanine, L-leucine and L-methionine, into cyclodipeptides. This Staphylococcus haemolyticus (strain JCSC1435) protein is Cyclo(L-leucyl-L-leucyl) synthase.